Here is a 237-residue protein sequence, read N- to C-terminus: Lectin alpha chain (237 aa).

The Mn(2+) site is built by Glu-8 and Asp-10. Positions 10, 12, 14, and 19 each coordinate Ca(2+). Residues Tyr-12 and Asn-14 each coordinate a carbohydrate. Residues Asp-19 and His-24 each contribute to the Mn(2+) site. 99 to 100 (LY) contributes to the a carbohydrate binding site. Asp-208 is a binding site for Ca(2+). Arg-228 lines the a carbohydrate pocket.

Belongs to the leguminous lectin family. As to quaternary structure, homodimer and homotetramer. Oligomerization is pH-dependent with homotetramers forming at pH 4 and above.

In terms of biological role, D-mannose/D-glucose-binding lectin. Has anti-inflammatory activity in animal models when applied intravenously. Has antinociceptive activity in mice when applied intravenously. The protein is Lectin alpha chain of Canavalia boliviana.